The following is a 78-amino-acid chain: Beta-defensin 29 (78 aa).

An N-terminal signal peptide occupies residues 1–23; the sequence is MPVTKSYFMTVVVVLILVDETTG. Intrachain disulfides connect Cys40/Cys67, Cys47/Cys61, and Cys51/Cys68.

The protein belongs to the beta-defensin family. As to expression, highly expressed in the cauda epididymis.

It localises to the secreted. Functionally, has antibacterial activity. The chain is Beta-defensin 29 (Defb29) from Mus musculus (Mouse).